Here is a 262-residue protein sequence, read N- to C-terminus: Tropinone reductase homolog At2g29290 (262 aa).

13–37 is an NADP(+) binding site; that stretch reads LVTGGTKGIGEAVVEELSILGARVH. Position 146 (Ser146) interacts with substrate. Tyr159 acts as the Proton acceptor in catalysis.

It belongs to the short-chain dehydrogenases/reductases (SDR) family. SDR65C subfamily.

The polypeptide is Tropinone reductase homolog At2g29290 (Arabidopsis thaliana (Mouse-ear cress)).